We begin with the raw amino-acid sequence, 286 residues long: uncharacterized protein (286 aa).

A run of 6 helical transmembrane segments spans residues 52–74 (ILWTIIVANGAILFTAHYVLIGL), 79–101 (LIAIFVVMLSGVMLYAPLAFLFL), 142–161 (WWDPLLVGFFWIAAGFVSFF), 168–190 (VLVFLLLIAPLALLSVKCPGAIL), 203–225 (IQATFLVKLAVLIFASLAAVALV), and 257–276 (IIWIAWIMLTSLGLLIASFM).

The protein resides in the cell membrane. This is an uncharacterized protein from Archaeoglobus fulgidus (strain ATCC 49558 / DSM 4304 / JCM 9628 / NBRC 100126 / VC-16).